Here is a 633-residue protein sequence, read N- to C-terminus: CDK5 and ABL1 enzyme substrate 1 (633 aa).

A compositionally biased stretch (low complexity) spans 1-29; that stretch reads MAAAAAAATTAACSSGSAGTDAAGASGLQ. The tract at residues 1–99 is disordered; that stretch reads MAAAAAAATT…EGGAAKPGAG (99 aa). The segment at 1–109 is interaction with TDRD7; that stretch reads MAAAAAAATT…GACGARTRFS (109 aa). The span at 51 to 61 shows a compositional bias: basic and acidic residues; that stretch reads PPRKPRMDPRR. S168 and S287 each carry phosphoserine. The interval 179 to 492 is interaction with CDK3; sequence QWQPPRPAPL…TTVIDYVKPS (314 aa). S313 is modified (phosphoserine; by CDK2 and CDK3). T415 carries the phosphothreonine modification.

Belongs to the cyclin family. As to quaternary structure, found in a complex with p53/TP53. Found in a number of complexes with CDK2, CDK3, CDK5, ABL1, TDRD7, CDK17, CCNA1, CCNE1 and TP73. Interacts with CDK2, CDK3, CDK5, ABL1 and TDRD7. In terms of processing, phosphorylated on Ser-313 by CCNE1/CDK3. Phosphorylated on serine/threonine residues by CDK5 and on tyrosine residues by ABL1. Also phosphorylated in vitro by CCNA1/CDK2, CCNE1/CDK2, CCNA1/CDK3 and CCNE1/CDK3. Expressed in breast, pancreas, colon, head and neck (at protein level). Strongly decreased in more than half of cases of atypical endometrial hyperplasia and in more than 90% of endometrial cancers.

Its subcellular location is the nucleus. It localises to the cytoplasm. Cyclin-dependent kinase binding protein. Enhances cyclin-dependent kinase tyrosine phosphorylation by nonreceptor tyrosine kinases, such as that of CDK5 by activated ABL1, which leads to increased CDK5 activity and is critical for neuronal development, and that of CDK2 by WEE1, which leads to decreased CDK2 activity and growth inhibition. Positively affects neuronal outgrowth. Plays a role as a regulator for p53/p73-induced cell death. The sequence is that of CDK5 and ABL1 enzyme substrate 1 (CABLES1) from Homo sapiens (Human).